Here is an 87-residue protein sequence, read N- to C-terminus: UPF0250 protein NE1487 (87 aa).

Belongs to the UPF0250 family.

The sequence is that of UPF0250 protein NE1487 from Nitrosomonas europaea (strain ATCC 19718 / CIP 103999 / KCTC 2705 / NBRC 14298).